The primary structure comprises 282 residues: Pantothenate synthetase (282 aa).

An ATP-binding site is contributed by 26-33; sequence MGNLHEGH. The active-site Proton donor is the histidine 33. Glutamine 57 is a binding site for (R)-pantoate. Glutamine 57 contacts beta-alanine. Residue 148 to 151 participates in ATP binding; the sequence is GKKD. Residue glutamine 154 participates in (R)-pantoate binding. An ATP-binding site is contributed by 185-188; that stretch reads LSSR.

Belongs to the pantothenate synthetase family. In terms of assembly, homodimer.

It localises to the cytoplasm. The catalysed reaction is (R)-pantoate + beta-alanine + ATP = (R)-pantothenate + AMP + diphosphate + H(+). The protein operates within cofactor biosynthesis; (R)-pantothenate biosynthesis; (R)-pantothenate from (R)-pantoate and beta-alanine: step 1/1. Its function is as follows. Catalyzes the condensation of pantoate with beta-alanine in an ATP-dependent reaction via a pantoyl-adenylate intermediate. This chain is Pantothenate synthetase, found in Paracidovorax citrulli (strain AAC00-1) (Acidovorax citrulli).